Reading from the N-terminus, the 455-residue chain is Bifunctional protein GlmU (455 aa).

The interval 1–226 is pyrophosphorylase; sequence MSLDIVILAA…PMEVQGANDR (226 aa). UDP-N-acetyl-alpha-D-glucosamine is bound by residues 8-11, K22, Q73, 78-79, 99-101, G136, E151, N166, and N224; these read LAAG, GT, and YGD. Mg(2+) is bound at residue D101. N224 provides a ligand contact to Mg(2+). A linker region spans residues 227-247; that stretch reads RQLSELERHYQLREGRRLMAQ. Residues 248-455 are N-acetyltransferase; the sequence is GVTLRDPARF…WKRPEKIKKS (208 aa). The UDP-N-acetyl-alpha-D-glucosamine site is built by R330 and K348. The active-site Proton acceptor is the H360. The UDP-N-acetyl-alpha-D-glucosamine site is built by Y363 and N374. Residues A377, 383 to 384, S402, A420, and R437 each bind acetyl-CoA; that span reads NY.

It in the N-terminal section; belongs to the N-acetylglucosamine-1-phosphate uridyltransferase family. In the C-terminal section; belongs to the transferase hexapeptide repeat family. Homotrimer. Mg(2+) serves as cofactor.

The protein localises to the cytoplasm. The catalysed reaction is alpha-D-glucosamine 1-phosphate + acetyl-CoA = N-acetyl-alpha-D-glucosamine 1-phosphate + CoA + H(+). The enzyme catalyses N-acetyl-alpha-D-glucosamine 1-phosphate + UTP + H(+) = UDP-N-acetyl-alpha-D-glucosamine + diphosphate. The protein operates within nucleotide-sugar biosynthesis; UDP-N-acetyl-alpha-D-glucosamine biosynthesis; N-acetyl-alpha-D-glucosamine 1-phosphate from alpha-D-glucosamine 6-phosphate (route II): step 2/2. It functions in the pathway nucleotide-sugar biosynthesis; UDP-N-acetyl-alpha-D-glucosamine biosynthesis; UDP-N-acetyl-alpha-D-glucosamine from N-acetyl-alpha-D-glucosamine 1-phosphate: step 1/1. Its pathway is bacterial outer membrane biogenesis; LPS lipid A biosynthesis. In terms of biological role, catalyzes the last two sequential reactions in the de novo biosynthetic pathway for UDP-N-acetylglucosamine (UDP-GlcNAc). The C-terminal domain catalyzes the transfer of acetyl group from acetyl coenzyme A to glucosamine-1-phosphate (GlcN-1-P) to produce N-acetylglucosamine-1-phosphate (GlcNAc-1-P), which is converted into UDP-GlcNAc by the transfer of uridine 5-monophosphate (from uridine 5-triphosphate), a reaction catalyzed by the N-terminal domain. This chain is Bifunctional protein GlmU, found in Pseudomonas entomophila (strain L48).